The primary structure comprises 185 residues: Ribosome-recycling factor (185 aa).

The protein belongs to the RRF family.

It localises to the cytoplasm. Functionally, responsible for the release of ribosomes from messenger RNA at the termination of protein biosynthesis. May increase the efficiency of translation by recycling ribosomes from one round of translation to another. The polypeptide is Ribosome-recycling factor (Streptococcus thermophilus (strain CNRZ 1066)).